The following is a 489-amino-acid chain: Dentin matrix acidic phosphoprotein 1 (489 aa).

A signal peptide spans 1 to 16 (MKTVILLTFLWGLSCA). The tract at residues 22 to 489 (YQNTESESSE…QDDNDCQDGY (468 aa)) is disordered. Positions 82 to 100 (DKEEDEDDSGDDTFGDEDN) are enriched in acidic residues. Positions 123–138 (DTTQSSEDSTSQENSA) are enriched in low complexity. 2 stretches are compositionally biased toward basic and acidic residues: residues 143 to 159 (SDSK…RPEA) and 217 to 227 (RSEESKGDHEP). The span at 263–274 (DSNSRETQSVST) shows a compositional bias: polar residues. The span at 275–287 (EDFRSKEESRSET) shows a compositional bias: basic and acidic residues. Positions 316 to 332 (EPSQESSSESQEGVASE) are enriched in low complexity. A Cell attachment site motif is present at residues 334–336 (RGD). An N-linked (GlcNAc...) asparagine glycan is attached at Asn340. Residues 346 to 358 (DQRDSESSEEDRL) are compositionally biased toward basic and acidic residues. Residue Asn378 is glycosylated (N-linked (GlcNAc...) asparagine). The segment covering 386-397 (ESQESAQDEDSS) has biased composition (acidic residues). The segment covering 398–419 (SQEGLQSQSASRESRSQESQSE) has biased composition (low complexity). A compositionally biased stretch (basic and acidic residues) spans 420-442 (QDSRSEENRDSDSQDSSRSKEES). An N-linked (GlcNAc...) asparagine glycan is attached at Asn443. The segment covering 453-478 (EDNHPKNIEADNRKLIVDAYHNKPIG) has biased composition (basic and acidic residues). Acidic residues predominate over residues 479 to 489 (DQDDNDCQDGY).

Interacts with importin alpha. In terms of processing, phosphorylated in the cytosol and extracellular matrix and unphosphorylated in the nucleus. Phosphorylation is necessary for nucleocytoplasmic transport and may be catalyzed by a nuclear isoform of CK2 and can be augmented by calcium. Phosphorylated (in vitro) by FAM20C in the extracellular medium at sites within the S-x-E/pS motif. As to expression, expressed in tooth particularly in odontoblast and ameloblast.

It is found in the nucleus. The protein resides in the cytoplasm. It localises to the secreted. The protein localises to the extracellular space. Its subcellular location is the extracellular matrix. Functionally, may have a dual function during osteoblast differentiation. In the nucleus of undifferentiated osteoblasts, unphosphorylated form acts as a transcriptional component for activation of osteoblast-specific genes like osteocalcin. During the osteoblast to osteocyte transition phase it is phosphorylated and exported into the extracellular matrix, where it regulates nucleation of hydroxyapatite. The protein is Dentin matrix acidic phosphoprotein 1 (Dmp1) of Rattus norvegicus (Rat).